Consider the following 931-residue polypeptide: Isoleucine--tRNA ligase (931 aa).

Positions 58 to 68 (PYANGHLHCGH) match the 'HIGH' region motif. Glu-559 contacts L-isoleucyl-5'-AMP. A 'KMSKS' region motif is present at residues 600 to 604 (KLSKS). ATP is bound at residue Lys-603. Zn(2+) is bound by residues Cys-894, Cys-897, Cys-914, and Cys-917.

This sequence belongs to the class-I aminoacyl-tRNA synthetase family. IleS type 1 subfamily. As to quaternary structure, monomer. It depends on Zn(2+) as a cofactor.

It localises to the cytoplasm. It catalyses the reaction tRNA(Ile) + L-isoleucine + ATP = L-isoleucyl-tRNA(Ile) + AMP + diphosphate. In terms of biological role, catalyzes the attachment of isoleucine to tRNA(Ile). As IleRS can inadvertently accommodate and process structurally similar amino acids such as valine, to avoid such errors it has two additional distinct tRNA(Ile)-dependent editing activities. One activity is designated as 'pretransfer' editing and involves the hydrolysis of activated Val-AMP. The other activity is designated 'posttransfer' editing and involves deacylation of mischarged Val-tRNA(Ile). This Legionella pneumophila (strain Corby) protein is Isoleucine--tRNA ligase.